The primary structure comprises 309 residues: Isopentenyl-diphosphate Delta-isomerase II (309 aa).

Lys112 contacts substrate. His116 and His128 together coordinate Mg(2+). The 153-residue stretch at 126–278 (LLHRAFSVFL…GLKLSPWFRL (153 aa)) folds into the Nudix hydrolase domain. Residues Arg147 and Lys151 each contribute to the substrate site. The active site involves Cys163. Ser164 provides a ligand contact to substrate. Mg(2+) contacts are provided by Glu223 and Glu225. Glu225 is a catalytic residue.

It belongs to the IPP isomerase type 1 family. Mg(2+) is required as a cofactor.

The catalysed reaction is isopentenyl diphosphate = dimethylallyl diphosphate. Its pathway is isoprenoid biosynthesis; dimethylallyl diphosphate biosynthesis; dimethylallyl diphosphate from isopentenyl diphosphate: step 1/1. It participates in porphyrin-containing compound metabolism; chlorophyll biosynthesis. Its function is as follows. Catalyzes the 1,3-allylic rearrangement of the homoallylic substrate isopentenyl (IPP) to its highly electrophilic allylic isomer, dimethylallyl diphosphate (DMAPP). The chain is Isopentenyl-diphosphate Delta-isomerase II (IPI2) from Camptotheca acuminata (Happy tree).